The primary structure comprises 197 residues: GTP cyclohydrolase-2 (197 aa).

50–54 contacts GTP; that stretch reads RIHSE. Residues cysteine 55, cysteine 66, and cysteine 68 each contribute to the Zn(2+) site. Residues glutamine 71, 93–95, and threonine 115 each bind GTP; that span reads EGR. The active-site Proton acceptor is the aspartate 127. Arginine 129 (nucleophile) is an active-site residue. Residues threonine 150 and lysine 155 each coordinate GTP.

The protein belongs to the GTP cyclohydrolase II family. The cofactor is Zn(2+).

It carries out the reaction GTP + 4 H2O = 2,5-diamino-6-hydroxy-4-(5-phosphoribosylamino)-pyrimidine + formate + 2 phosphate + 3 H(+). Its pathway is cofactor biosynthesis; riboflavin biosynthesis; 5-amino-6-(D-ribitylamino)uracil from GTP: step 1/4. Its function is as follows. Catalyzes the conversion of GTP to 2,5-diamino-6-ribosylamino-4(3H)-pyrimidinone 5'-phosphate (DARP), formate and pyrophosphate. The protein is GTP cyclohydrolase-2 of Aeromonas hydrophila subsp. hydrophila (strain ATCC 7966 / DSM 30187 / BCRC 13018 / CCUG 14551 / JCM 1027 / KCTC 2358 / NCIMB 9240 / NCTC 8049).